The following is a 596-amino-acid chain: M-phase inducer phosphatase (596 aa).

Residues Ser-99 and Ser-178 each carry the phosphoserine modification. The tract at residues 174–221 is disordered; that stretch reads LSSSSFDSYLRPNVSRSRSSGNAPPFLRSRSSSSYSINKKKGTSGGQA. One can recognise a Rhodanese domain in the interval 429–533; the sequence is IFDKCIIIDC…FYENHKNRCD (105 aa). The active-site Phosphocysteine intermediate is the Cys-480.

It belongs to the MPI phosphatase family. Interacts with rad24 during G2 in a srk1-dependent manner; the interaction is increased during osmostress. Post-translationally, phosphorylated by srk1 in the N-terminus; phosphorylation promotes nuclear exclusion.

The protein resides in the cytoplasm. It localises to the nucleus. It catalyses the reaction O-phospho-L-tyrosyl-[protein] + H2O = L-tyrosyl-[protein] + phosphate. In terms of biological role, tyrosine protein phosphatase which functions as a dosage-dependent inducer of mitotic and meiotic progression. Directly dephosphorylates cdc2 and stimulates its kinase activity. Required for the G2/M transition of the cell cycle. Required for induction of meiosis II. The chain is M-phase inducer phosphatase from Schizosaccharomyces pombe (strain 972 / ATCC 24843) (Fission yeast).